We begin with the raw amino-acid sequence, 133 residues long: MTENRRMKKVNAMLRESIAKVILKDVKHPKISNRWITITRVSLSRDLQSARVYVSIMPHENSQEETLAALKASAGFIACQASKDVVLKYFPDLNFYMEDIFSPQDHIESLLLKIAEQDKKLTHNNNNSSELHD.

It belongs to the RbfA family. In terms of assembly, monomer. Binds 30S ribosomal subunits, but not 50S ribosomal subunits or 70S ribosomes.

It is found in the cytoplasm. Functionally, one of several proteins that assist in the late maturation steps of the functional core of the 30S ribosomal subunit. Associates with free 30S ribosomal subunits (but not with 30S subunits that are part of 70S ribosomes or polysomes). Required for efficient processing of 16S rRNA. May interact with the 5'-terminal helix region of 16S rRNA. In Chlamydia muridarum (strain MoPn / Nigg), this protein is Ribosome-binding factor A.